The following is a 142-amino-acid chain: Hemoglobin subunit alpha (142 aa).

The region spanning 2 to 142 is the Globin domain; that stretch reads VLSAADKTNV…VSTVLTSKYR (141 aa). Ser4 carries the post-translational modification Phosphoserine. Position 8 is an N6-succinyllysine (Lys8). Thr9 bears the Phosphothreonine mark. The residue at position 12 (Lys12) is an N6-succinyllysine. Lys17 carries the N6-acetyllysine; alternate modification. Position 17 is an N6-succinyllysine; alternate (Lys17). Position 25 is a phosphotyrosine (Tyr25). An N6-succinyllysine modification is found at Lys41. A Phosphoserine modification is found at Ser50. His59 contributes to the O2 binding site. Residue His88 coordinates heme b. Ser103 carries the post-translational modification Phosphoserine. Position 109 is a phosphothreonine (Thr109). Phosphoserine is present on residues Ser125 and Ser132. Phosphothreonine occurs at positions 135 and 138. Ser139 carries the phosphoserine modification.

This sequence belongs to the globin family. As to quaternary structure, heterotetramer of two alpha chains and two beta chains. As to expression, red blood cells.

Its function is as follows. Involved in oxygen transport from the lung to the various peripheral tissues. Functionally, hemopressin acts as an antagonist peptide of the cannabinoid receptor CNR1. Hemopressin-binding efficiently blocks cannabinoid receptor CNR1 and subsequent signaling. This chain is Hemoglobin subunit alpha (HBA), found in Equus caballus (Horse).